The following is a 207-amino-acid chain: 8-oxoguanine DNA glycosylase/AP lyase (207 aa).

Residues K128 and D146 contribute to the active site.

It belongs to the type-2 OGG1 family.

It carries out the reaction 2'-deoxyribonucleotide-(2'-deoxyribose 5'-phosphate)-2'-deoxyribonucleotide-DNA = a 3'-end 2'-deoxyribonucleotide-(2,3-dehydro-2,3-deoxyribose 5'-phosphate)-DNA + a 5'-end 5'-phospho-2'-deoxyribonucleoside-DNA + H(+). Catalyzes the excision of an oxidatively damaged form of guanine (7,8-dihydro-8-oxoguanine = 8-oxoG) from DNA. Also cleaves the DNA backbone at apurinic/apyrimidinic sites (AP sites). The polypeptide is 8-oxoguanine DNA glycosylase/AP lyase (Saccharolobus islandicus (strain L.S.2.15 / Lassen #1) (Sulfolobus islandicus)).